Consider the following 776-residue polypeptide: Kinesin-like protein KIN-8A (776 aa).

2 disordered regions span residues 1–31 (MPVSTRASAAGGQPWSSAAPAPASAPGRGGA) and 80–135 (VGEV…KSSH). Residues 7 to 26 (ASAAGGQPWSSAAPAPASAP) show a composition bias toward low complexity. Residues 123–132 (PPPPPAPPPK) are compositionally biased toward pro residues. The Kinesin motor domain occupies 205 to 534 (RIMVFVRLRP…LHWADRAKEI (330 aa)). 297–304 (GATGAGKT) is a binding site for ATP. Residues 554-592 (TDQAKLVLELQKENSELRQQLARQQQKLLTVQAQTLASN) are a coiled coil. The segment at 590–611 (ASNASPQQSPAPSAQISTPCST) is disordered. Residues 593 to 604 (ASPQQSPAPSAQ) show a composition bias toward low complexity. A coiled-coil region spans residues 634 to 671 (AAENAQVRDLQRKVKAMEAEIEKMKKEHLLQLKQKDEF).

Belongs to the TRAFAC class myosin-kinesin ATPase superfamily. Kinesin family. KIN-8 subfamily.

In Oryza sativa subsp. japonica (Rice), this protein is Kinesin-like protein KIN-8A.